We begin with the raw amino-acid sequence, 328 residues long: Gonadotropin-releasing hormone receptor (328 aa).

Residues 1–38 (MANSDSPEQNENHCSAINSSIPLTPGSLPTLTLSGKIR) are Extracellular-facing. N18 is a glycosylation site (N-linked (GlcNAc...) asparagine). A helical transmembrane segment spans residues 39–58 (VTVTFFLFLLSTIFNTSFLL). Residues 59–77 (KLQNWTQRKEKRKKLSRMK) lie on the Cytoplasmic side of the membrane. The helical transmembrane segment at 78–97 (LLLKHLTLANLLETLIVMPL) threads the bilayer. Residues 98–115 (DGMWNITVQWYAGELLCK) lie on the Extracellular side of the membrane. N-linked (GlcNAc...) asparagine glycosylation is present at N102. A disulfide bond links C114 and C196. The helical transmembrane segment at 116 to 137 (VLSYLKLFSMYAPAFMMVVISL) threads the bilayer. The Cytoplasmic portion of the chain corresponds to 138–164 (DRSLAITKPLAVKSNSKLGQFMIGLAW). The chain crosses the membrane as a helical span at residues 165 to 184 (LLSSIFAGPQLYIFGMIHLA). The Extracellular portion of the chain corresponds to 185–212 (DDSGQTEGFSQCVTHCSFPQWWHQAFYN). Residues 213–232 (FFTFSCLFIIPLLIMVICNA) form a helical membrane-spanning segment. Over 233-281 (KIIFTLTRVLHQDPHKLQLNQSKNNIPRARLRTLKMTVAFATSFTVCWT) the chain is Cytoplasmic. A helical membrane pass occupies residues 282–300 (PYYVLGIWYWFDPDMVNRV). The Extracellular portion of the chain corresponds to 301–306 (SDPVNH). A helical membrane pass occupies residues 307–326 (FFFLFAFLNPCFDPLIYGYF). The Cytoplasmic segment spans residues 327–328 (SL).

This sequence belongs to the G-protein coupled receptor 1 family.

The protein localises to the cell membrane. Receptor for gonadotropin releasing hormone (GnRH) that mediates the action of GnRH to stimulate the secretion of the gonadotropic hormones luteinizing hormone (LH) and follicle-stimulating hormone (FSH). This receptor mediates its action by association with G-proteins that activate a phosphatidylinositol-calcium second messenger system. The protein is Gonadotropin-releasing hormone receptor (GNRHR) of Bos taurus (Bovine).